The sequence spans 205 residues: Large ribosomal subunit protein uL4 (205 aa).

The protein belongs to the universal ribosomal protein uL4 family. As to quaternary structure, part of the 50S ribosomal subunit.

Its function is as follows. One of the primary rRNA binding proteins, this protein initially binds near the 5'-end of the 23S rRNA. It is important during the early stages of 50S assembly. It makes multiple contacts with different domains of the 23S rRNA in the assembled 50S subunit and ribosome. Functionally, forms part of the polypeptide exit tunnel. This Thermus thermophilus (strain ATCC BAA-163 / DSM 7039 / HB27) protein is Large ribosomal subunit protein uL4.